Consider the following 456-residue polypeptide: Anthocyanidin 3-O-glucosyltransferase UFGT (456 aa).

S18 contributes to the kaempferol binding site. Position 18 (S18) interacts with quercetin. T19 provides a ligand contact to UDP. Residue T19 participates in UDP-alpha-D-glucose binding. Positions 20 and 84 each coordinate kaempferol. The active-site Proton acceptor is H20. A quercetin-binding site is contributed by Q84. The Charge relay role is filled by D119. T141 serves as a coordination point for UDP-alpha-D-glucose. Kaempferol contacts are provided by H150 and Q188. Quercetin-binding residues include H150 and Q188. Residues T280, S306, W332, A333, and H350 each coordinate UDP. 9 residues coordinate UDP-alpha-D-glucose: T280, S306, W332, A333, H350, W353, N354, S355, and E358. Residues N354, S355, and E358 each contribute to the UDP site. G373 lines the quercetin pocket. UDP-alpha-D-glucose is bound by residues D374 and Q375.

The protein belongs to the UDP-glycosyltransferase family. In terms of tissue distribution, detected only in berry skin.

It catalyses the reaction an anthocyanidin + UDP-alpha-D-glucose + H(+) = an anthocyanidin 3-O-beta-D-glucoside + UDP. The catalysed reaction is cyanidin + UDP-alpha-D-glucose = cyanidin 3-O-beta-D-glucoside + UDP + H(+). The enzyme catalyses delphinidin + UDP-alpha-D-glucose = delphinidin 3-O-beta-D-glucoside + UDP. It carries out the reaction peonidin + UDP-alpha-D-glucose = peonidin 3-O-beta-D-glucoside + UDP. It catalyses the reaction pelargonidin + UDP-alpha-D-glucose = pelargonidin 3-O-beta-D-glucoside + UDP. The catalysed reaction is malvidin + UDP-alpha-D-glucose = malvidin 3-O-beta-D-glucoside + UDP. The enzyme catalyses a flavonol + UDP-alpha-D-glucose = a flavonol 3-O-beta-D-glucoside + UDP + H(+). Its pathway is pigment biosynthesis; anthocyanin biosynthesis. Inhibited by Mn(2+) and Zn(2+). In terms of biological role, in the presence of other necessary color factors, this glycosylation reaction allows the accumulation of anthocyanin pigments. Involved in the formation of red wine pigments. UDP-glucose (UDP-Glc) is the physiological sugar donor, and cyanidin is the natural acceptor in vivo. Can glucosylate the anthocyanidins delphinidin, peonidin, pelargonidin and malvidin. The flavonols quercitin and kaempferol can also be glucosylated in vitro, but with glucosylation rates 50-100 times lower than cyanidin. In vitro, can use UDP-Glc, UDP-5SGlc, UDP-Xyl, UDP-Man, UDP-Gal, UDP-GlcNAc, GDP-Glc, dTDP-Glc and dTDP-Xyl as sugar donors, but not UDP-6OMeGal, UDP-Ara, UDP-6FGal, UDP-GlcN, UDP-2FGal, UDP-5SAra, GDP-Man, GDP-Fuc, UDP-Fuc or UDP-Rha. This is Anthocyanidin 3-O-glucosyltransferase UFGT from Vitis vinifera (Grape).